Here is a 348-residue protein sequence, read N- to C-terminus: Protein RecA (348 aa).

An ATP-binding site is contributed by 65–72 (GPESSGKT).

It belongs to the RecA family.

Its subcellular location is the cytoplasm. Its function is as follows. Can catalyze the hydrolysis of ATP in the presence of single-stranded DNA, the ATP-dependent uptake of single-stranded DNA by duplex DNA, and the ATP-dependent hybridization of homologous single-stranded DNAs. It interacts with LexA causing its activation and leading to its autocatalytic cleavage. This chain is Protein RecA, found in Alteromonas mediterranea (strain DSM 17117 / CIP 110805 / LMG 28347 / Deep ecotype).